Consider the following 209-residue polypeptide: Prolactin (209 aa).

An N-terminal signal peptide occupies residues 1–24 (MAQRFKGSNLFLTALLCLASQGHA). 2 disulfides stabilise this stretch: Cys70–Cys184 and Cys201–Cys209.

The protein belongs to the somatotropin/prolactin family.

Its subcellular location is the secreted. This Anguilla japonica (Japanese eel) protein is Prolactin (prl).